A 74-amino-acid polypeptide reads, in one-letter code: Kappa-scoloptoxin(07)-Ssm2e (74 aa).

Residues 1–19 (MLVFYALLFVSVFSNTVMG) form the signal peptide. The propeptide occupies 20-41 (ATIDMPIPKPILREAIEEIDVN).

This sequence belongs to the scoloptoxin-07 family. Contains 3 disulfide bonds. Expressed by the venom gland.

It localises to the secreted. Inhibits voltage-gated potassium channels. The polypeptide is Kappa-scoloptoxin(07)-Ssm2e (Scolopendra mutilans (Chinese red-headed centipede)).